We begin with the raw amino-acid sequence, 314 residues long: Glutathione synthetase (314 aa).

The ATP-grasp domain maps to 125–311 (EKLAAQLFPQ…IAGQLFDAIE (187 aa)). 151-208 (FVQKQEQAILKPLDGMGGHSIFRSSNGDPNLNVILETLTDGGRTLAIAQRYLQQIIEG) contributes to the ATP binding site. Residues glutamate 282 and asparagine 284 each contribute to the Mg(2+) site.

This sequence belongs to the prokaryotic GSH synthase family. The cofactor is Mg(2+). Mn(2+) is required as a cofactor.

It catalyses the reaction gamma-L-glutamyl-L-cysteine + glycine + ATP = glutathione + ADP + phosphate + H(+). It functions in the pathway sulfur metabolism; glutathione biosynthesis; glutathione from L-cysteine and L-glutamate: step 2/2. The sequence is that of Glutathione synthetase from Xylella fastidiosa (strain 9a5c).